The chain runs to 302 residues: MSVPDATVVKAFLLDLQNRICAGLEQLDGQASFAADSWTRTEGGGGTSRVLTQGAVFEQAGVNFSHVTGAAMPASATAHRPELAGRSFEAMGVSLVIHPKNPYIPTTHANVRFFIAHKDGADPVWWFGGGFDLTPYYPFEEDVREWHQTAKNLCLPFGDDIYPKYKKWCDEYFFLPHRNETRGVGGLFFDDLNQAGFDKSFDFMQAVGNGFLTAYAPIVERRKETPYGEREREFQLYRRGRYVEFNLVYDRGTLFGLQTGGRTESILMSMPPLVRWQYAYTPEAGSPEADLYDNYLKPRDWV.

Substrate is bound at residue S94. A divalent metal cation-binding residues include H98 and H108. The active-site Proton donor is the H108. Position 110-112 (110-112 (NVR)) interacts with substrate. The a divalent metal cation site is built by H147 and H177. The tract at residues 242-277 (YVEFNLVYDRGTLFGLQTGGRTESILMSMPPLVRWQ) is important for dimerization. 260 to 262 (GGR) contributes to the substrate binding site.

This sequence belongs to the aerobic coproporphyrinogen-III oxidase family. In terms of assembly, homodimer. Requires a divalent metal cation as cofactor.

It is found in the cytoplasm. It carries out the reaction coproporphyrinogen III + O2 + 2 H(+) = protoporphyrinogen IX + 2 CO2 + 2 H2O. Its pathway is porphyrin-containing compound metabolism; protoporphyrin-IX biosynthesis; protoporphyrinogen-IX from coproporphyrinogen-III (O2 route): step 1/1. Involved in the heme biosynthesis. Catalyzes the aerobic oxidative decarboxylation of propionate groups of rings A and B of coproporphyrinogen-III to yield the vinyl groups in protoporphyrinogen-IX. This Shewanella sp. (strain MR-4) protein is Oxygen-dependent coproporphyrinogen-III oxidase.